The chain runs to 51 residues: Large ribosomal subunit protein eL39z/eL39x (51 aa).

The tract at residues 1–21 (MPSHKSFMIKKKLGKKMRQNR) is disordered. The span at 7–19 (FMIKKKLGKKMRQ) shows a compositional bias: basic residues.

The protein belongs to the eukaryotic ribosomal protein eL39 family.

The sequence is that of Large ribosomal subunit protein eL39z/eL39x (RPL39A) from Arabidopsis thaliana (Mouse-ear cress).